Consider the following 90-residue polypeptide: Protein LURE 1.2 (90 aa).

The N-terminal stretch at 1–19 (MKLPIIFLTLLIFVSSCTS) is a signal peptide. The N-linked (GlcNAc...) asparagine glycan is linked to Asn23. 3 disulfide bridges follow: Cys58/Cys75, Cys61/Cys82, and Cys65/Cys84. Residues 67 to 87 (RRGKYIRTCSFERKLCRCSIS) form a PRK6 binding region.

The protein belongs to the DEFL family. As to quaternary structure, interacts with MDIS1, MIK1, MIK2 and TDR/PXY, but not with MDIS2. Binds to PRK6 LRRs. In terms of tissue distribution, expressed in the pistil. Detected exclusively in the synergid cells.

The protein resides in the secreted. In terms of biological role, pollen tube attractants guiding pollen tubes to the ovular micropyle. Attracts specifically pollen tubes from A.thaliana, but not those from A.lyrata. Triggers endocytosis of MDIS1 in the pollen tube tip. The protein is Protein LURE 1.2 of Arabidopsis thaliana (Mouse-ear cress).